The following is a 300-amino-acid chain: Bifunctional protein FolD 1 (300 aa).

NADP(+) contacts are provided by residues 166–168 (GRS), serine 191, and isoleucine 232.

This sequence belongs to the tetrahydrofolate dehydrogenase/cyclohydrolase family. In terms of assembly, homodimer.

The enzyme catalyses (6R)-5,10-methylene-5,6,7,8-tetrahydrofolate + NADP(+) = (6R)-5,10-methenyltetrahydrofolate + NADPH. It carries out the reaction (6R)-5,10-methenyltetrahydrofolate + H2O = (6R)-10-formyltetrahydrofolate + H(+). It functions in the pathway one-carbon metabolism; tetrahydrofolate interconversion. Its function is as follows. Catalyzes the oxidation of 5,10-methylenetetrahydrofolate to 5,10-methenyltetrahydrofolate and then the hydrolysis of 5,10-methenyltetrahydrofolate to 10-formyltetrahydrofolate. In Roseobacter denitrificans (strain ATCC 33942 / OCh 114) (Erythrobacter sp. (strain OCh 114)), this protein is Bifunctional protein FolD 1.